The sequence spans 127 residues: Large ribosomal subunit protein bL12c (127 aa).

A disordered region spans residues 104 to 127 (GVAKDAAEEAKKQIEDAGGKASLK). The span at 105–121 (VAKDAAEEAKKQIEDAG) shows a compositional bias: basic and acidic residues.

The protein belongs to the bacterial ribosomal protein bL12 family. As to quaternary structure, homodimer. Part of the ribosomal stalk of the 50S ribosomal subunit. Forms a multimeric L10(L12)X complex, where L10 forms an elongated spine to which 2 to 4 L12 dimers bind in a sequential fashion. Binds GTP-bound translation factors.

It is found in the plastid. It localises to the chloroplast. In terms of biological role, forms part of the ribosomal stalk which helps the ribosome interact with GTP-bound translation factors. Is thus essential for accurate translation. This chain is Large ribosomal subunit protein bL12c, found in Trieres chinensis (Marine centric diatom).